We begin with the raw amino-acid sequence, 86 residues long: Large ribosomal subunit protein bL27 (86 aa).

The tract at residues 1 to 26 (MATKKAGGSSRNGRDSAGRRLGVKQS) is disordered.

This sequence belongs to the bacterial ribosomal protein bL27 family.

In Rickettsia canadensis (strain McKiel), this protein is Large ribosomal subunit protein bL27.